The sequence spans 326 residues: Malate dehydrogenase (326 aa).

NAD(+) is bound at residue 12–18; that stretch reads GGTGQIA. Substrate-binding residues include Arg93 and Arg99. NAD(+) contacts are provided by residues Asn106, Gln113, and 130-132; that span reads VGN. Asn132 and Arg163 together coordinate substrate. His188 serves as the catalytic Proton acceptor.

It belongs to the LDH/MDH superfamily. MDH type 2 family.

The catalysed reaction is (S)-malate + NAD(+) = oxaloacetate + NADH + H(+). Catalyzes the reversible oxidation of malate to oxaloacetate. This is Malate dehydrogenase from Chlamydia muridarum (strain MoPn / Nigg).